The chain runs to 89 residues: Small ribosomal subunit protein bS20 (89 aa).

The span at 1 to 12 (MANHKSAIKRHR) shows a compositional bias: basic residues. The segment at 1-26 (MANHKSAIKRHRQSVERAGRNRAART) is disordered.

It belongs to the bacterial ribosomal protein bS20 family.

In terms of biological role, binds directly to 16S ribosomal RNA. In Desulfovibrio desulfuricans (strain ATCC 27774 / DSM 6949 / MB), this protein is Small ribosomal subunit protein bS20.